Consider the following 193-residue polypeptide: Chaperone protein TorD (193 aa).

It belongs to the TorD/DmsD family. TorD subfamily.

It localises to the cytoplasm. Involved in the biogenesis of TorA. Acts on TorA before the insertion of the molybdenum cofactor and, as a result, probably favors a conformation of the apoenzyme that is competent for acquiring the cofactor. This chain is Chaperone protein TorD, found in Histophilus somni (strain 129Pt) (Haemophilus somnus).